The following is an 879-amino-acid chain: Alanine--tRNA ligase (879 aa).

4 residues coordinate Zn(2+): His-566, His-570, Cys-668, and His-672.

Belongs to the class-II aminoacyl-tRNA synthetase family. The cofactor is Zn(2+).

It localises to the cytoplasm. It catalyses the reaction tRNA(Ala) + L-alanine + ATP = L-alanyl-tRNA(Ala) + AMP + diphosphate. Its function is as follows. Catalyzes the attachment of alanine to tRNA(Ala) in a two-step reaction: alanine is first activated by ATP to form Ala-AMP and then transferred to the acceptor end of tRNA(Ala). Also edits incorrectly charged Ser-tRNA(Ala) and Gly-tRNA(Ala) via its editing domain. This Clostridium novyi (strain NT) protein is Alanine--tRNA ligase.